A 145-amino-acid polypeptide reads, in one-letter code: UPF0179 protein Msm_0285 (145 aa).

This sequence belongs to the UPF0179 family.

This chain is UPF0179 protein Msm_0285, found in Methanobrevibacter smithii (strain ATCC 35061 / DSM 861 / OCM 144 / PS).